The primary structure comprises 483 residues: Regulatory protein ViaA (483 aa).

This sequence belongs to the ViaA family. In terms of assembly, homodimer. Interacts with RavA.

The protein resides in the cytoplasm. Its function is as follows. Component of the RavA-ViaA chaperone complex, which may act on the membrane to optimize the function of some of the respiratory chains. ViaA stimulates the ATPase activity of RavA. This chain is Regulatory protein ViaA, found in Escherichia coli O81 (strain ED1a).